We begin with the raw amino-acid sequence, 215 residues long: S-crystallin 3 (215 aa).

Residues 2–80 (PSYTLHYFNH…YLAREFGYHG (79 aa)) form the GST N-terminal domain. Positions 82–215 (SNMEMARVDF…YLKKRCRTDF (134 aa)) constitute a GST C-terminal domain.

This sequence belongs to the GST superfamily. In terms of tissue distribution, lens.

S-crystallins are structural components of squids and octopi eye lens. Contains relatively little if any GST activity. The sequence is that of S-crystallin 3 from Enteroctopus dofleini (North Pacific giant octopus).